A 761-amino-acid polypeptide reads, in one-letter code: Protein PHTF1 (761 aa).

The 145-residue stretch at 6–150 (RDAISWYQKK…VHCQIVSTQI (145 aa)) folds into the PHTF domain. Transmembrane regions (helical) follow at residues 77–97 (GLVRVVFFPLFSSWWIQVTSL), 99–119 (IFVWLLLLYLMQVTAVVLYLL), and 121–141 (PIVSASEVLGPLCLMLLMGTV). Residues 152–184 (RPSGNNGNRRRRKLRKTVNGDGSRDNGNNSPDK) are disordered. The segment covering 170–181 (NGDGSRDNGNNS) has biased composition (low complexity). Residues Asn179 and Asn224 are each glycosylated (N-linked (GlcNAc...) asparagine). A phosphoserine mark is found at Ser272, Ser276, Ser277, Ser333, and Ser335. The tract at residues 345 to 414 (VFSQGSRSGM…NTIHSGTKRD (70 aa)) is disordered. Low complexity predominate over residues 347-363 (SQGSRSGMSGGSRSLNL). An N-linked (GlcNAc...) asparagine glycan is attached at Asn362. Basic and acidic residues predominate over residues 364–375 (SRRDSESTRHDS). Asn430 carries N-linked (GlcNAc...) asparagine glycosylation. 4 consecutive transmembrane segments (helical) span residues 472–492 (GVGYQMLGNAVTVGLALFPFL), 514–534 (TLFCGAPPVTPVVILSIINFI), 610–630 (VVVSSVFLLTLSIAFICCAQV), and 644–664 (WEFLIWETALLLFLLRLASLG). N-linked (GlcNAc...) asparagine glycosylation is found at Asn673 and Asn732. The chain crosses the membrane as a helical span at residues 736–756 (VVILSAVSGVISDLLGFNIRL).

In terms of assembly, interacts with FEM1B. In terms of tissue distribution, widely expressed with highest levels in testis.

Its subcellular location is the endoplasmic reticulum membrane. It localises to the golgi apparatus. The protein localises to the cis-Golgi network membrane. The chain is Protein PHTF1 from Mus musculus (Mouse).